The chain runs to 90 residues: Small ribosomal subunit protein uS17 (90 aa).

It belongs to the universal ribosomal protein uS17 family. As to quaternary structure, part of the 30S ribosomal subunit.

One of the primary rRNA binding proteins, it binds specifically to the 5'-end of 16S ribosomal RNA. The sequence is that of Small ribosomal subunit protein uS17 from Methylobacillus flagellatus (strain ATCC 51484 / DSM 6875 / VKM B-1610 / KT).